The sequence spans 141 residues: Large ribosomal subunit protein uL11 (141 aa).

The protein belongs to the universal ribosomal protein uL11 family. As to quaternary structure, part of the ribosomal stalk of the 50S ribosomal subunit. Interacts with L10 and the large rRNA to form the base of the stalk. L10 forms an elongated spine to which L12 dimers bind in a sequential fashion forming a multimeric L10(L12)X complex. Post-translationally, one or more lysine residues are methylated.

Its function is as follows. Forms part of the ribosomal stalk which helps the ribosome interact with GTP-bound translation factors. This is Large ribosomal subunit protein uL11 from Chlorobium phaeobacteroides (strain BS1).